The primary structure comprises 212 residues: Deoxyribose-phosphate aldolase (212 aa).

The Proton donor/acceptor role is filled by Asp89. The active-site Schiff-base intermediate with acetaldehyde is Lys151. The Proton donor/acceptor role is filled by Lys180.

It belongs to the DeoC/FbaB aldolase family. DeoC type 1 subfamily.

The protein localises to the cytoplasm. It carries out the reaction 2-deoxy-D-ribose 5-phosphate = D-glyceraldehyde 3-phosphate + acetaldehyde. It participates in carbohydrate degradation; 2-deoxy-D-ribose 1-phosphate degradation; D-glyceraldehyde 3-phosphate and acetaldehyde from 2-deoxy-alpha-D-ribose 1-phosphate: step 2/2. Catalyzes a reversible aldol reaction between acetaldehyde and D-glyceraldehyde 3-phosphate to generate 2-deoxy-D-ribose 5-phosphate. This chain is Deoxyribose-phosphate aldolase, found in Clostridium botulinum (strain 657 / Type Ba4).